A 92-amino-acid polypeptide reads, in one-letter code: Small nuclear ribonucleoprotein E (92 aa).

One can recognise a Sm domain in the interval 18–92; sequence INLIFRYLQN…NITLLQSVSN (75 aa).

The protein belongs to the snRNP Sm proteins family. In terms of assembly, core component of the spliceosomal U1, U2, U4 and U5 small nuclear ribonucleoproteins (snRNPs), the building blocks of the spliceosome. Most spliceosomal snRNPs contain a common set of Sm proteins, snrpb, snrpd1, snrpd2, snrpd3, snrpe, snrpf and snrpg that assemble in a heptameric protein ring on the Sm site of the small nuclear RNA to form the core snRNP. Component of the U1 snRNP. The U1 snRNP is composed of the U1 snRNA and the 7 core Sm proteins snrpb, snrpd1, snrpd2, snrpd3, snrpe, snrpf and snrpg, and at least three U1 snRNP-specific proteins snrnp70/u1-70k, snrpa/u1-a and snrpc/u1-c. Component of the U4/U6-U5 tri-snRNP complex composed of the U4, U6 and U5 snRNAs and at least prpf3, prpf4, prpf6, prpf8, prpf31, snrnp200, txnl4a, snrnp40, snrpb, snrpd1, snrpd2, snrpd3, snrpe, snrpf, snrpg, ddx23, cd2bp2, ppih, snu13, eftud2, sart1 and usp39, plus lsm2, lsm3, lsm4, lsm5, lsm6, lsm7 and lsm8. Component of the U7 snRNP complex, or U7 Sm protein core complex, that is composed of the U7 snRNA and at least lsm10, lsm11, snrpb, snrpd3, snrpe, snrpf and snrpg; the complex does not contain snrpd1 and snrpd2. Component of the minor spliceosome, which splices U12-type introns. Part of the SMN-Sm complex that contains smn1, gemin2/sip1, ddx20/gemin3, gemin4, gemin5, gemin6, gemin7, gemin8, strap/unrip and the Sm proteins snrpb, snrpd1, snrpd2, snrpd3, snrpe, snrpf and snrpg; catalyzes core snRNPs assembly. Forms a 6S pICln-Sm complex composed of clns1a/pICln, snrpd1, snrpd2, snrpe, snrpf and snrpg; ring-like structure where clns1a/pICln mimics additional Sm proteins and which is unable to assemble into the core snRNP.

The protein localises to the cytoplasm. Its subcellular location is the cytosol. It localises to the nucleus. Its function is as follows. Plays a role in pre-mRNA splicing as a core component of the spliceosomal U1, U2, U4 and U5 small nuclear ribonucleoproteins (snRNPs), the building blocks of the spliceosome. Component of both the pre-catalytic spliceosome B complex and activated spliceosome C complexes. As a component of the minor spliceosome, involved in the splicing of U12-type introns in pre-mRNAs. As part of the U7 snRNP it is involved in histone 3'-end processing. The protein is Small nuclear ribonucleoprotein E (snrpe) of Danio rerio (Zebrafish).